The following is a 206-amino-acid chain: Enterobactin synthase component D (206 aa).

D107, E109, and E152 together coordinate Mg(2+).

It belongs to the P-Pant transferase superfamily. EntD family. In terms of assembly, entB, EntD, EntE, and EntF form a multienzyme complex called enterobactin synthase. It depends on Mg(2+) as a cofactor.

The protein localises to the membrane. It carries out the reaction apo-[aryl-carrier protein] + CoA = holo-[aryl-carrier protein] + adenosine 3',5'-bisphosphate + H(+). The catalysed reaction is apo-[peptidyl-carrier protein] + CoA = holo-[peptidyl-carrier protein] + adenosine 3',5'-bisphosphate + H(+). Its pathway is siderophore biosynthesis; enterobactin biosynthesis. Its function is as follows. Involved in the biosynthesis of the siderophore enterobactin (enterochelin), which is a macrocyclic trimeric lactone of N-(2,3-dihydroxybenzoyl)-serine. The serine trilactone serves as a scaffolding for the three catechol functionalities that provide hexadentate coordination for the tightly ligated iron(2+) atoms. Plays an essential role in the assembly of the enterobactin by catalyzing the transfer of the 4'-phosphopantetheine (Ppant) moiety from coenzyme A to the apo-domains of both EntB (ArCP domain) and EntF (PCP domain) to yield their holo-forms which make them competent for the activation of 2,3-dihydroxybenzoate (DHB) and L-serine, respectively. The sequence is that of Enterobactin synthase component D from Escherichia coli O157:H7.